The primary structure comprises 419 residues: Serine hydroxymethyltransferase (419 aa).

(6S)-5,6,7,8-tetrahydrofolate-binding positions include Leu121 and 125–127 (GHL). Residue Lys230 is modified to N6-(pyridoxal phosphate)lysine. Residue 355-357 (SPF) participates in (6S)-5,6,7,8-tetrahydrofolate binding.

Belongs to the SHMT family. In terms of assembly, homodimer. The cofactor is pyridoxal 5'-phosphate.

Its subcellular location is the cytoplasm. The enzyme catalyses (6R)-5,10-methylene-5,6,7,8-tetrahydrofolate + glycine + H2O = (6S)-5,6,7,8-tetrahydrofolate + L-serine. The protein operates within one-carbon metabolism; tetrahydrofolate interconversion. It functions in the pathway amino-acid biosynthesis; glycine biosynthesis; glycine from L-serine: step 1/1. Its function is as follows. Catalyzes the reversible interconversion of serine and glycine with tetrahydrofolate (THF) serving as the one-carbon carrier. This reaction serves as the major source of one-carbon groups required for the biosynthesis of purines, thymidylate, methionine, and other important biomolecules. Also exhibits THF-independent aldolase activity toward beta-hydroxyamino acids, producing glycine and aldehydes, via a retro-aldol mechanism. This Alkalilimnicola ehrlichii (strain ATCC BAA-1101 / DSM 17681 / MLHE-1) protein is Serine hydroxymethyltransferase.